A 331-amino-acid polypeptide reads, in one-letter code: UPF0194 membrane protein CKO_02332 (331 aa).

Residues 1 to 15 (MKKPVVIALAVAALA) form the signal peptide. Residues 142–207 (ISANDLENAR…ELDLQDTTLI (66 aa)) are a coiled coil.

Belongs to the UPF0194 family.

Its subcellular location is the periplasm. This is UPF0194 membrane protein CKO_02332 from Citrobacter koseri (strain ATCC BAA-895 / CDC 4225-83 / SGSC4696).